We begin with the raw amino-acid sequence, 60 residues long: UPF0434 protein YE1549 (60 aa).

Belongs to the UPF0434 family.

The protein is UPF0434 protein YE1549 of Yersinia enterocolitica serotype O:8 / biotype 1B (strain NCTC 13174 / 8081).